A 236-amino-acid polypeptide reads, in one-letter code: Purine nucleoside phosphorylase DeoD-type (236 aa).

Histidine 5 is a binding site for a purine D-ribonucleoside. Phosphate-binding positions include glycine 21, arginine 25, arginine 44, and 88–91 (RIGS). A purine D-ribonucleoside is bound by residues 180–182 (EME) and 204–205 (SD). The active-site Proton donor is aspartate 205.

This sequence belongs to the PNP/UDP phosphorylase family. As to quaternary structure, homohexamer; trimer of homodimers.

The catalysed reaction is a purine D-ribonucleoside + phosphate = a purine nucleobase + alpha-D-ribose 1-phosphate. The enzyme catalyses a purine 2'-deoxy-D-ribonucleoside + phosphate = a purine nucleobase + 2-deoxy-alpha-D-ribose 1-phosphate. Functionally, catalyzes the reversible phosphorolytic breakdown of the N-glycosidic bond in the beta-(deoxy)ribonucleoside molecules, with the formation of the corresponding free purine bases and pentose-1-phosphate. This is Purine nucleoside phosphorylase DeoD-type from Chromobacterium violaceum (strain ATCC 12472 / DSM 30191 / JCM 1249 / CCUG 213 / NBRC 12614 / NCIMB 9131 / NCTC 9757 / MK).